Reading from the N-terminus, the 756-residue chain is 5-methyltetrahydropteroyltriglutamate--homocysteine methyltransferase (756 aa).

5-methyltetrahydropteroyltri-L-glutamate contacts are provided by residues 16-19 and K116; that span reads RELK. L-homocysteine is bound by residues 435–437 and E488; that span reads IGS. Residues 435 to 437 and E488 each bind L-methionine; that span reads IGS. 5-methyltetrahydropteroyltri-L-glutamate contacts are provided by residues 519 to 520 and W565; that span reads RC. D603 serves as a coordination point for L-homocysteine. D603 is a binding site for L-methionine. Position 609 (E609) interacts with 5-methyltetrahydropteroyltri-L-glutamate. Residues H645, C647, and E669 each coordinate Zn(2+). H698 serves as the catalytic Proton donor. C730 is a binding site for Zn(2+).

It belongs to the vitamin-B12 independent methionine synthase family. Zn(2+) serves as cofactor.

It carries out the reaction 5-methyltetrahydropteroyltri-L-glutamate + L-homocysteine = tetrahydropteroyltri-L-glutamate + L-methionine. Its pathway is amino-acid biosynthesis; L-methionine biosynthesis via de novo pathway; L-methionine from L-homocysteine (MetE route): step 1/1. In terms of biological role, catalyzes the transfer of a methyl group from 5-methyltetrahydrofolate to homocysteine resulting in methionine formation. In Marinobacter nauticus (strain ATCC 700491 / DSM 11845 / VT8) (Marinobacter aquaeolei), this protein is 5-methyltetrahydropteroyltriglutamate--homocysteine methyltransferase.